We begin with the raw amino-acid sequence, 418 residues long: Hepatic and glial cell adhesion molecule (418 aa).

The first 33 residues, 1–33 (MKRERGALSRASRALRLSPFVYLLLIQPVPLEG), serve as a signal peptide directing secretion. Positions 34–142 (VNITSPVRLI…GEKTINLTVD (109 aa)) constitute an Ig-like V-type domain. The Extracellular portion of the chain corresponds to 34-240 (VNITSPVRLI…VKITVYRRSS (207 aa)). N-linked (GlcNAc...) asparagine glycosylation is found at Asn35, Asn138, Asn167, and Asn189. In terms of domain architecture, Ig-like C2-type spans 148-234 (PQVLVASTTV…QVRSLPVKIT (87 aa)). A disulfide bridge connects residues Cys168 and Cys217. The helical transmembrane segment at 241 to 261 (LYIILSTGGIFLLVTLVTVCA) threads the bilayer. Residues 262 to 418 (CWKPSKKSRK…DESGQVEISA (157 aa)) lie on the Cytoplasmic side of the membrane. Positions 271-418 (KKRKLEKQNS…DESGQVEISA (148 aa)) are disordered. Ser280 is subject to Phosphoserine. A compositionally biased stretch (basic and acidic residues) spans 287-308 (NDDRLKSEADTLPRSGEQERKN). A phosphoserine mark is found at Ser321, Ser352, and Ser379. Residues 341 to 358 (GYSVSPPVPGRSPGLPIR) are compositionally biased toward low complexity. Residues 385–396 (SSPGRSRSSSRS) are compositionally biased toward low complexity.

As to quaternary structure, homodimer. Dimer formation occurs predominantly through cis interactions on the cell surface. Part of a complex containing MLC1, TRPV4, AQP4 and ATP1B1. Interacts with CLCN2. N-glycosylated.

Its subcellular location is the cytoplasm. The protein resides in the cell membrane. Its function is as follows. Involved in regulating cell motility and cell-matrix interactions. May inhibit cell growth through suppression of cell proliferation. In glia, associates and targets CLCN2 at astrocytic processes and myelinated fiber tracts where it may regulate transcellular chloride flux involved in neuron excitability. In Mus musculus (Mouse), this protein is Hepatic and glial cell adhesion molecule.